We begin with the raw amino-acid sequence, 374 residues long: Outer membrane protein assembly factor BamC (374 aa).

Positions 1–22 are cleaved as a signal peptide; sequence MSKFYKSGRVTTAVIVALSLSA. Residue Cys-23 is the site of N-palmitoyl cysteine attachment. Cys-23 is lipidated: S-diacylglycerol cysteine.

Belongs to the BamC family. In terms of assembly, part of the Bam complex.

Its subcellular location is the cell outer membrane. Part of the outer membrane protein assembly complex, which is involved in assembly and insertion of beta-barrel proteins into the outer membrane. In Psychromonas ingrahamii (strain DSM 17664 / CCUG 51855 / 37), this protein is Outer membrane protein assembly factor BamC.